Here is a 335-residue protein sequence, read N- to C-terminus: Holliday junction branch migration complex subunit RuvB (335 aa).

The tract at residues 1-181 (MDRIVEIEKY…FGMQFRLEFY (181 aa)) is large ATPase domain (RuvB-L). Residues L20, R21, G62, K65, T66, T67, 128–130 (EDY), R171, Y181, and R218 each bind ATP. Residue T66 coordinates Mg(2+). The small ATPAse domain (RuvB-S) stretch occupies residues 182–252 (KDSELALILQ…RANEALNSLG (71 aa)). The segment at 255 to 335 (ELGFDAMDLR…LNYEKTLFEE (81 aa)) is head domain (RuvB-H). 2 residues coordinate DNA: R309 and R314.

Belongs to the RuvB family. Homohexamer. Forms an RuvA(8)-RuvB(12)-Holliday junction (HJ) complex. HJ DNA is sandwiched between 2 RuvA tetramers; dsDNA enters through RuvA and exits via RuvB. An RuvB hexamer assembles on each DNA strand where it exits the tetramer. Each RuvB hexamer is contacted by two RuvA subunits (via domain III) on 2 adjacent RuvB subunits; this complex drives branch migration. In the full resolvosome a probable DNA-RuvA(4)-RuvB(12)-RuvC(2) complex forms which resolves the HJ.

Its subcellular location is the cytoplasm. The enzyme catalyses ATP + H2O = ADP + phosphate + H(+). Its function is as follows. The RuvA-RuvB-RuvC complex processes Holliday junction (HJ) DNA during genetic recombination and DNA repair, while the RuvA-RuvB complex plays an important role in the rescue of blocked DNA replication forks via replication fork reversal (RFR). RuvA specifically binds to HJ cruciform DNA, conferring on it an open structure. The RuvB hexamer acts as an ATP-dependent pump, pulling dsDNA into and through the RuvAB complex. RuvB forms 2 homohexamers on either side of HJ DNA bound by 1 or 2 RuvA tetramers; 4 subunits per hexamer contact DNA at a time. Coordinated motions by a converter formed by DNA-disengaged RuvB subunits stimulates ATP hydrolysis and nucleotide exchange. Immobilization of the converter enables RuvB to convert the ATP-contained energy into a lever motion, pulling 2 nucleotides of DNA out of the RuvA tetramer per ATP hydrolyzed, thus driving DNA branch migration. The RuvB motors rotate together with the DNA substrate, which together with the progressing nucleotide cycle form the mechanistic basis for DNA recombination by continuous HJ branch migration. Branch migration allows RuvC to scan DNA until it finds its consensus sequence, where it cleaves and resolves cruciform DNA. The polypeptide is Holliday junction branch migration complex subunit RuvB (Campylobacter jejuni subsp. doylei (strain ATCC BAA-1458 / RM4099 / 269.97)).